The sequence spans 287 residues: ATP synthase gamma chain (287 aa).

It belongs to the ATPase gamma chain family. F-type ATPases have 2 components, CF(1) - the catalytic core - and CF(0) - the membrane proton channel. CF(1) has five subunits: alpha(3), beta(3), gamma(1), delta(1), epsilon(1). CF(0) has three main subunits: a, b and c.

It is found in the cell inner membrane. In terms of biological role, produces ATP from ADP in the presence of a proton gradient across the membrane. The gamma chain is believed to be important in regulating ATPase activity and the flow of protons through the CF(0) complex. The protein is ATP synthase gamma chain of Salmonella gallinarum (strain 287/91 / NCTC 13346).